A 357-amino-acid chain; its full sequence is Spermatogenesis- and oogenesis-specific basic helix-loop-helix-containing protein 1 (357 aa).

Positions 1–14 are enriched in basic and acidic residues; it reads MASGGHERANEDYR. Residues 1–40 are disordered; that stretch reads MASGGHERANEDYRVSGITGCSKTPQPETQDSLQTSSQSS. Residues 19–31 show a composition bias toward polar residues; it reads TGCSKTPQPETQD. The bHLH domain occupies 54–105; that stretch reads PSLRRNVVSERERRRRISLSCEHLRALLPQFDGRREDMASVLEMSVYFLQLA. The tract at residues 145-210 is disordered; sequence KPDSGIAKPS…EPESSSLGPG (66 aa). Residues 200–209 are compositionally biased toward low complexity; sequence SEPESSSLGP.

As to quaternary structure, forms both hetero- and homodimers with SOHLH2. In terms of tissue distribution, in males, it is mainly expressed in testis, while in females it is mainly expressed in ovary. In testis, it is exclusively expressed in spermatogonia, with a preference for prespermatogonia and type A spermatogonia. In ovary, it is detected in germ cell cysts, primordial follicles, and primary follicles but is undetectable by the secondary follicle stage (at protein level). Expressed in the majority of spermatogonia in adult animals, but not in the most undifferentiated spermatogonial population.

The protein resides in the cytoplasm. It is found in the nucleus. Its function is as follows. Transcription regulator of both male and female germline differentiation. Suppresses genes involved in spermatogonial stem cells maintenance, and induces genes important for spermatogonial differentiation. Coordinates oocyte differentiation without affecting meiosis I. The chain is Spermatogenesis- and oogenesis-specific basic helix-loop-helix-containing protein 1 (Sohlh1) from Mus musculus (Mouse).